The following is a 279-amino-acid chain: Probable cyclic nucleotide phosphodiesterase Psyc_2036 (279 aa).

D23, H25, D70, N100, H179, H218, and H220 together coordinate Fe cation. AMP-binding positions include H25, D70, and 100-101 (NH). An AMP-binding site is contributed by H220.

The protein belongs to the cyclic nucleotide phosphodiesterase class-III family. Fe(2+) is required as a cofactor.

This chain is Probable cyclic nucleotide phosphodiesterase Psyc_2036, found in Psychrobacter arcticus (strain DSM 17307 / VKM B-2377 / 273-4).